A 299-amino-acid polypeptide reads, in one-letter code: Phosphoribosylaminoimidazole-succinocarboxamide synthase (299 aa).

The protein belongs to the SAICAR synthetase family.

It carries out the reaction 5-amino-1-(5-phospho-D-ribosyl)imidazole-4-carboxylate + L-aspartate + ATP = (2S)-2-[5-amino-1-(5-phospho-beta-D-ribosyl)imidazole-4-carboxamido]succinate + ADP + phosphate + 2 H(+). The protein operates within purine metabolism; IMP biosynthesis via de novo pathway; 5-amino-1-(5-phospho-D-ribosyl)imidazole-4-carboxamide from 5-amino-1-(5-phospho-D-ribosyl)imidazole-4-carboxylate: step 1/2. This chain is Phosphoribosylaminoimidazole-succinocarboxamide synthase (ade7), found in Schizosaccharomyces pombe (strain 972 / ATCC 24843) (Fission yeast).